Here is a 211-residue protein sequence, read N- to C-terminus: 3-demethoxyubiquinol 3-hydroxylase (211 aa).

Glu60, Glu90, His93, Glu142, Glu174, and His177 together coordinate Fe cation.

This sequence belongs to the COQ7 family. Requires Fe cation as cofactor.

It is found in the cell membrane. It carries out the reaction a 5-methoxy-2-methyl-3-(all-trans-polyprenyl)benzene-1,4-diol + AH2 + O2 = a 3-demethylubiquinol + A + H2O. Its pathway is cofactor biosynthesis; ubiquinone biosynthesis. Catalyzes the hydroxylation of 2-nonaprenyl-3-methyl-6-methoxy-1,4-benzoquinol during ubiquinone biosynthesis. This is 3-demethoxyubiquinol 3-hydroxylase from Francisella tularensis subsp. novicida (strain U112).